Reading from the N-terminus, the 159-residue chain is uncharacterized protein (159 aa).

In terms of domain architecture, N-acetyltransferase spans 7-151 (LLINYKTLEE…NPLVWHPASE (145 aa)).

This is an uncharacterized protein from Bacillus licheniformis (strain ATCC 14580 / DSM 13 / JCM 2505 / CCUG 7422 / NBRC 12200 / NCIMB 9375 / NCTC 10341 / NRRL NRS-1264 / Gibson 46).